The sequence spans 309 residues: Tyrosine recombinase XerD (309 aa).

Residues 3 to 88 (MRASLAIENF…ALRQFFRFLY (86 aa)) enclose the Core-binding (CB) domain. In terms of domain architecture, Tyr recombinase spans 109 to 302 (PLPKIMSVEN…LEERLHKLVS (194 aa)). Active-site residues include R158, K182, H254, R257, and H280. Y289 serves as the catalytic O-(3'-phospho-DNA)-tyrosine intermediate.

This sequence belongs to the 'phage' integrase family. XerD subfamily. As to quaternary structure, forms a cyclic heterotetrameric complex composed of two molecules of XerC and two molecules of XerD.

The protein localises to the cytoplasm. Site-specific tyrosine recombinase, which acts by catalyzing the cutting and rejoining of the recombining DNA molecules. The XerC-XerD complex is essential to convert dimers of the bacterial chromosome into monomers to permit their segregation at cell division. It also contributes to the segregational stability of plasmids. The sequence is that of Tyrosine recombinase XerD from Brucella suis biovar 1 (strain 1330).